The chain runs to 193 residues: Large ribosomal subunit protein uL5 (193 aa).

The protein belongs to the universal ribosomal protein uL5 family. As to quaternary structure, part of the 50S ribosomal subunit; part of the 5S rRNA/L5/L18/L25 subcomplex. Contacts the 5S rRNA and the P site tRNA. Forms a bridge to the 30S subunit in the 70S ribosome.

In terms of biological role, this is one of the proteins that bind and probably mediate the attachment of the 5S RNA into the large ribosomal subunit, where it forms part of the central protuberance. In the 70S ribosome it contacts protein S13 of the 30S subunit (bridge B1b), connecting the 2 subunits; this bridge is implicated in subunit movement. Contacts the P site tRNA; the 5S rRNA and some of its associated proteins might help stabilize positioning of ribosome-bound tRNAs. This Rhizorhabdus wittichii (strain DSM 6014 / CCUG 31198 / JCM 15750 / NBRC 105917 / EY 4224 / RW1) (Sphingomonas wittichii) protein is Large ribosomal subunit protein uL5.